Reading from the N-terminus, the 1258-residue chain is MEEEDESRGKTEESGEDRGDGPPDRDPALSPSAFILRAIQQAVGSSLQGDLPNDKDGSRCCGLQWRRCCRSPRSEPRSQESGGADMATVLDTAADSFLVELVSILDPPDTWVPSHLDLQPGESEDVLELVAEVRIGDRDPMPLPVPSLLPRLRAWRTGKTVSPQSHASRPACSRHLLTLGTGDGGPAPPPAPSSASSSPSPSPSSSSPSPPPPPPPPPPPALPAPRFDIYDPFHPTDEAYSPPPAPEQKYDPFEPTGSNPSSSAGTPSPEEEEEEEEEEEEEGLSQSISRISETLAGIYDDNSLSQDFPGDDSPHREPPPPQTLGAPGTPPQADSTRAEGAPRRRVFVVGPEAEACLEGKVSVEVVTTAGGPALPLPPLPPTDPEIEEGEIVQPEEEPRVAVSLFRAARPRQPPASVATLASVAAPAAPPASAPRAPEGDDFLSLHADSDGEGALQVDLGEPPAPPAADARWGGLDLRRKILTQRRERYRQRSASPGPPPARKKARRERQRSGDPAPPDSPTWEAKKHRSRERKLGSHSTARRRSRSRSRRRSRSRSADRRRGSHRSRSREKRRRRRRSASPPPAASSSSSSRRERHRGKRREGGKKKKKRSRSRAEKRSGDLEKLPAPVPPSGSDRDSRRRGAVPPSIQDLTDHDLFAIKRTITVGRPDKTEPRAPSPAPAVSPKREVLYDSEGLSADERGAKGDKDRRRSGAASSSSSSREKASRRKALDGDRGRDRDRSSKKTRPPKDSAPGSGALPKAPPSSGSSSSSSSCSSRKVKLQSKVAVLIREGVSSTTPAKDSSSSGLGSIGVKFSRDRESRSPFLKPDERAPAEGVKVAPGSTKPKKTKAKAKAGAKKAKGTKGKTKPSKTRKKVRSGGSSTASGGPGSLKKSKADSCSQAASAKGTEETSWSGEERTTKAPSTPPPKVAPPPPALTPDSQTVDSSCKTPEVSFLPEEASEDTGVRVGAEEEEEEEEEEEEEEEQQPATTTATSTAAAAPSTAPSAGSTAGDSGAEDGPAARASQLPTLPPPMPWNLPAGVDCTTSGVLALTALLFKMEEANLASRAKAQELIQATNQILSHRKPPSTLGVTPAPVPTSLGLPPGPSSYLLPGSLPIGGCGSTPPTPTGLVPASDKREGSSSSEGRGDTDKYLKKLHTQERAVEEVKLAIKPYYQKKDITKEEYKDILRKAVHKICHSKSGEINPVKVSNLVRAYVQRYRYFRKHGRKPGDPPGPPRPPKEPGPPDKGGPGLPLPPL.

Disordered regions lie at residues Met1–Ser32, Lys159–Arg345, Gly370–Pro398, Pro410–Met1034, Gly1114–Leu1154, and Phe1223–Leu1258. Residues Ser7 to Pro27 show a composition bias toward basic and acidic residues. Residues Ser193–Ser207 are compositionally biased toward low complexity. The segment covering Pro208 to Pro223 has biased composition (pro residues). The span at Asp228 to Asp237 shows a compositional bias: basic and acidic residues. The residue at position 241 (Ser241) is a Phosphoserine. A compositionally biased stretch (polar residues) spans Thr256 to Thr266. Acidic residues predominate over residues Pro269 to Gly283. Thr329 is modified (phosphothreonine). A compositionally biased stretch (pro residues) spans Leu374–Asp383. Acidic residues predominate over residues Pro384 to Glu395. The span at Pro414 to Pro426 shows a compositional bias: low complexity. Phosphoserine is present on residues Ser444 and Ser449. Positions Lys480–Gln491 are enriched in basic residues. Phosphoserine is present on residues Ser493, Ser495, Ser512, and Ser520. Composition is skewed to basic residues over residues Thr540 to Ser555 and Arg562 to Ser579. Ser579 and Ser581 each carry phosphoserine. Over residues Arg594–Arg613 the composition is skewed to basic residues. Basic and acidic residues predominate over residues Ser614 to Lys625. Thr665 is modified (phosphothreonine). A phosphoserine mark is found at Ser678 and Ser684. Residue Tyr691 is modified to Phosphotyrosine. Ser693 and Ser697 each carry phosphoserine. Composition is skewed to basic and acidic residues over residues Ala698 to Arg711 and Ser721 to Ser743. Low complexity-rich tracts occupy residues Ser752–Ser777 and Ser795–Ser806. Lys814 participates in a covalent cross-link: Glycyl lysine isopeptide (Lys-Gly) (interchain with G-Cter in SUMO2). Over residues Phe815–Pro833 the composition is skewed to basic and acidic residues. Phosphoserine is present on residues Ser821 and Ser823. The span at Lys845–Arg877 shows a compositional bias: basic residues. Phosphoserine is present on residues Ser878, Ser885, Ser912, and Ser914. Positions Ser924–Leu937 are enriched in pro residues. Phosphothreonine is present on residues Thr925 and Thr938. The span at Asp940 to Lys949 shows a compositional bias: polar residues. Residue Ser941 is modified to Phosphoserine. Thr950 is subject to Phosphothreonine. Acidic residues predominate over residues Glu971–Gln986. Residues Gln987–Gly1019 are compositionally biased toward low complexity. The interval Pro1133 to Leu1258 is necessary for interaction with the CTD domain of POLR2A. The span at Ser1135–Leu1154 shows a compositional bias: basic and acidic residues. The span at Pro1246–Leu1258 shows a compositional bias: pro residues.

Belongs to the splicing factor SR family. In terms of assembly, interacts with POLR2A.

It is found in the nucleus. Its function is as follows. May function in pre-mRNA splicing. The protein is Splicing factor, arginine/serine-rich 19 (Scaf1) of Rattus norvegicus (Rat).